The sequence spans 108 residues: DNA-binding protein HBbu (108 aa).

This sequence belongs to the bacterial histone-like protein family.

Its function is as follows. Histone-like DNA-binding protein which is capable of wrapping DNA to stabilize it, and thus to prevent its denaturation under extreme environmental conditions. This Borrelia parkeri protein is DNA-binding protein HBbu (hbb).